Here is a 157-residue protein sequence, read N- to C-terminus: Transcription elongation factor GreA (157 aa).

This sequence belongs to the GreA/GreB family.

Its function is as follows. Necessary for efficient RNA polymerase transcription elongation past template-encoded arresting sites. The arresting sites in DNA have the property of trapping a certain fraction of elongating RNA polymerases that pass through, resulting in locked ternary complexes. Cleavage of the nascent transcript by cleavage factors such as GreA or GreB allows the resumption of elongation from the new 3'terminus. GreA releases sequences of 2 to 3 nucleotides. This Chelativorans sp. (strain BNC1) protein is Transcription elongation factor GreA.